The following is a 324-amino-acid chain: IDS-like terpene synthase 2 (324 aa).

Mg(2+) is bound by residues Asp77 and Asp81.

This sequence belongs to the FPP/GGPP synthase family. The cofactor is Mg(2+).

It catalyses the reaction (2E)-geranyl diphosphate = (E)-beta-ocimene + diphosphate. It carries out the reaction (2E,6E)-farnesyl diphosphate = (3E,6E)-alpha-farnesene + diphosphate. The enzyme catalyses (2E,6E,10E)-geranylgeranyl diphosphate = (E,E,E)-alpha-springene + diphosphate. In terms of biological role, terpene synthase that shows monoterpene synthase activity and produces (E)-beta-ocimene as a major product, using geranyl diphosphate (GPP) as substrate. Also shows sesquiterpene synthase activity as it is able to convert farnesyl diphosphate (FPP) into (E,E)-alpha-farnesene. Finally, TPS2 can convert geranylgeranyl diphosphate into (E,E,E)-alpha-springene. This Melampsora lini (Rust fungus) protein is IDS-like terpene synthase 2.